The sequence spans 277 residues: 4-hydroxy-3-prenylphenylpyruvate oxygenase/4-hydroxy-3-prenylbenzoate synthase (277 aa).

This sequence belongs to the aldolase class II family. In terms of assembly, homotetramer. Fe(2+) serves as cofactor.

The enzyme catalyses 3-dimethylallyl-4-hydroxyphenylpyruvate + O2 = 3-dimethylallyl-4-hydroxymandelate + CO2. The catalysed reaction is 3-dimethylallyl-4-hydroxymandelate + O2 = 3-dimethylallyl-4-hydroxybenzoate + CO2 + H2O. Its pathway is antibiotic biosynthesis. Its activity is regulated as follows. Activated by ascorbate. Involved in the biosynthesis of ring A of the aminocoumarin antibiotic clorobiocin. Catalyzes two consecutive oxidative decarboxylations of 3-dimethylallyl-4-hydroxyphenylpyruvate (3DMA-4HPP) to yield 3-dimethylallyl-4-hydroxybenzoate (3DMA-4HB) via the 3-dimethylallyl-4-hydroxymandelic acid (3DMA-4HMA) intermediate. The protein is 4-hydroxy-3-prenylphenylpyruvate oxygenase/4-hydroxy-3-prenylbenzoate synthase of Streptomyces roseochromogenus subsp. oscitans.